Reading from the N-terminus, the 146-residue chain is Hemoglobin cathodic subunit beta (146 aa).

The region spanning 2 to 146 (QWSSSERSTI…VVSALSRQYF (145 aa)) is the Globin domain. Residues histidine 63 and histidine 92 each contribute to the heme b site.

This sequence belongs to the globin family. As to quaternary structure, heterotetramer of two alpha chains and two beta chains. As to expression, red blood cells.

In terms of biological role, involved in oxygen transport from the gills to the various peripheral tissues. The chain is Hemoglobin cathodic subunit beta from Conger conger (Conger eel).